A 221-amino-acid polypeptide reads, in one-letter code: Thymidylate kinase (221 aa).

11–18 provides a ligand contact to ATP; the sequence is GPDGAGKT.

Belongs to the thymidylate kinase family.

The enzyme catalyses dTMP + ATP = dTDP + ADP. Functionally, phosphorylation of dTMP to form dTDP in both de novo and salvage pathways of dTTP synthesis. In Lactiplantibacillus plantarum (strain ATCC BAA-793 / NCIMB 8826 / WCFS1) (Lactobacillus plantarum), this protein is Thymidylate kinase.